The primary structure comprises 500 residues: Intracellular exo-alpha-(1-&gt;5)-L-arabinofuranosidase 1 (500 aa).

Residues glutamate 27, asparagine 72, and asparagine 172 each contribute to the alpha-L-arabinofuranose site. Glutamate 173 serves as the catalytic Proton donor/acceptor. Tyrosine 244, glutamate 292, and glutamine 349 together coordinate alpha-L-arabinofuranose. Glutamate 292 acts as the Nucleophile in catalysis.

It belongs to the glycosyl hydrolase 51 family. As to quaternary structure, homohexamer; trimer of dimers.

It localises to the cytoplasm. It carries out the reaction Hydrolysis of terminal non-reducing alpha-L-arabinofuranoside residues in alpha-L-arabinosides.. The enzyme catalyses (20S)-ginsenoside Rc + H2O = L-arabinofuranose + (20S)-ginsenoside Rd. Its pathway is glycan metabolism; L-arabinan degradation. At a concentration of 5 mM, K(+), Cu(2+) and Ni(2+) exhibit inhibitory effects on the activity. Additionally, the chemical reagent SDS also displays a certain degree of inhibition. Enzymatic activity is largely unaffected by product feedback inhibition. Functionally, involved in the degradation of arabinan and is a key enzyme in the complete degradation of the plant cell wall. Catalyzes the cleavage of terminal alpha-(1-&gt;5)-arabinofuranosyl bonds in different hemicellulosic homopolysaccharides (branched and debranched arabinans). It acts preferentially on arabinotriose, arabinobiose and linear alpha-(1-&gt;5)-L-arabinan, and is much less effective on branched sugar beet arabinan. When expressed in E.coli, the recombinant enyzme can hydrolyze, with relatively low catalytic efficiency, the terminal alpha-L-arabinofuranoside at the C20 position of ginsenoside Rc to produce ginsenoside Rd, a rare ginsenoside that exhibits diverse and powerful pharmacological activities. In Bacillus subtilis (strain 168), this protein is Intracellular exo-alpha-(1-&gt;5)-L-arabinofuranosidase 1.